The following is a 149-amino-acid chain: Transcriptional repressor NrdR (149 aa).

A zinc finger lies at 3–34; it reads CPFCTAKDTKVIDSRLVGGGHQVRRRRECNDC. An ATP-cone domain is found at 49–139; sequence PRVIKQDGSR…VYRSFEDIRE (91 aa).

The protein belongs to the NrdR family. Zn(2+) is required as a cofactor.

Negatively regulates transcription of bacterial ribonucleotide reductase nrd genes and operons by binding to NrdR-boxes. The chain is Transcriptional repressor NrdR from Pseudoalteromonas translucida (strain TAC 125).